Here is a 98-residue protein sequence, read N- to C-terminus: NADH-ubiquinone oxidoreductase chain 4L (98 aa).

The next 3 helical transmembrane spans lie at 1–21, 30–50, and 61–81; these read MSMV…GLLV, LLCL…TILI, and IILL…LVMV.

It belongs to the complex I subunit 4L family. In terms of assembly, core subunit of respiratory chain NADH dehydrogenase (Complex I) which is composed of 45 different subunits.

Its subcellular location is the mitochondrion inner membrane. The catalysed reaction is a ubiquinone + NADH + 5 H(+)(in) = a ubiquinol + NAD(+) + 4 H(+)(out). Its function is as follows. Core subunit of the mitochondrial membrane respiratory chain NADH dehydrogenase (Complex I) which catalyzes electron transfer from NADH through the respiratory chain, using ubiquinone as an electron acceptor. Part of the enzyme membrane arm which is embedded in the lipid bilayer and involved in proton translocation. The protein is NADH-ubiquinone oxidoreductase chain 4L (MT-ND4L) of Pagophilus groenlandicus (Harp seal).